The sequence spans 34 residues: Photosystem II reaction center protein M (34 aa).

The helical transmembrane segment at 6–26 threads the bilayer; that stretch reads LGAIATALFVFIPCVFLILLY.

The protein belongs to the PsbM family. In terms of assembly, PSII is composed of 1 copy each of membrane proteins PsbA, PsbB, PsbC, PsbD, PsbE, PsbF, PsbH, PsbI, PsbJ, PsbK, PsbL, PsbM, PsbT, PsbX, PsbY, PsbZ, Psb30/Ycf12, peripheral proteins PsbO, CyanoQ (PsbQ), PsbU, PsbV and a large number of cofactors. It forms dimeric complexes.

It is found in the cellular thylakoid membrane. Its function is as follows. One of the components of the core complex of photosystem II (PSII). PSII is a light-driven water:plastoquinone oxidoreductase that uses light energy to abstract electrons from H(2)O, generating O(2) and a proton gradient subsequently used for ATP formation. It consists of a core antenna complex that captures photons, and an electron transfer chain that converts photonic excitation into a charge separation. This subunit is found at the monomer-monomer interface. The polypeptide is Photosystem II reaction center protein M (Acaryochloris marina (strain MBIC 11017)).